A 261-amino-acid polypeptide reads, in one-letter code: tRNA pseudouridine synthase A (261 aa).

Aspartate 51 (nucleophile) is an active-site residue. Tyrosine 109 serves as a coordination point for substrate.

It belongs to the tRNA pseudouridine synthase TruA family. As to quaternary structure, homodimer.

The catalysed reaction is uridine(38/39/40) in tRNA = pseudouridine(38/39/40) in tRNA. Formation of pseudouridine at positions 38, 39 and 40 in the anticodon stem and loop of transfer RNAs. The polypeptide is tRNA pseudouridine synthase A (Shewanella piezotolerans (strain WP3 / JCM 13877)).